Here is a 130-residue protein sequence, read N- to C-terminus: Small ribosomal subunit protein uS11 (130 aa).

Belongs to the universal ribosomal protein uS11 family. Part of the 30S ribosomal subunit. Interacts with proteins S7 and S18. Binds to IF-3.

In terms of biological role, located on the platform of the 30S subunit, it bridges several disparate RNA helices of the 16S rRNA. Forms part of the Shine-Dalgarno cleft in the 70S ribosome. The sequence is that of Small ribosomal subunit protein uS11 from Synechococcus sp. (strain WH7803).